The primary structure comprises 433 residues: Staphylopine synthase (433 aa).

NADP(+)-binding positions include 9 to 12 (TGPV), Arg33, 37 to 40 (SEKS), and Asp99. The active-site Proton donor/acceptor is His216.

This sequence belongs to the staphylopine dehydrogenase family. In terms of assembly, homodimer.

The catalysed reaction is staphylopine + NADP(+) + H2O = (2S)-2-amino-4-{[(1R)-1-carboxy-2-(1H-imidazol-4-yl)ethyl]amino}butanoate + pyruvate + NADPH + H(+). Functionally, catalyzes the NADPH-dependent reductive condensation of pyruvate to the intermediate formed by the adjacently encoded enzyme CntL, namely (2S)-2-amino-4-{[(1R)-1-carboxy-2-(1H-imidazol-4-yl)ethyl]amino}butanoate, leading to the production of staphylopine. This is the last step in the biosynthesis of the metallophore staphylopine, which is involved in the acquisition of nickel, cobalt, zinc, copper, and iron, and thus enables bacterial growth inside the host, where metal access is limited. Therefore, this enzyme probably contributes to staphylococcal virulence. Can use neither NADH nor alpha-ketoglutarate in place of NADPH and pyruvate, respectively. The protein is Staphylopine synthase of Staphylococcus aureus (strain Mu50 / ATCC 700699).